Consider the following 120-residue polypeptide: Putative non-specific lipid-transfer protein 14 (120 aa).

Positions 1 to 22 are cleaved as a signal peptide; sequence MTRSFSPVVSLFLLLLQTICSA. Disulfide bonds link cysteine 30–cysteine 80, cysteine 40–cysteine 57, cysteine 58–cysteine 102, and cysteine 78–cysteine 116.

It belongs to the plant LTP family.

Functionally, plant non-specific lipid-transfer proteins transfer phospholipids as well as galactolipids across membranes. May play a role in wax or cutin deposition in the cell walls of expanding epidermal cells and certain secretory tissues. In Arabidopsis thaliana (Mouse-ear cress), this protein is Putative non-specific lipid-transfer protein 14 (LTP14).